We begin with the raw amino-acid sequence, 290 residues long: Arylamine N-acetyltransferase 2 (290 aa).

Cysteine 68 acts as the Acyl-thioester intermediate in catalysis. 2 residues coordinate CoA: serine 103 and glycine 104. 106-107 (IH) serves as a coordination point for substrate. Residues histidine 107 and aspartate 122 contribute to the active site. CoA is bound at residue tyrosine 208.

Belongs to the arylamine N-acetyltransferase family.

It localises to the cytoplasm. It catalyses the reaction an arylamine + acetyl-CoA = an N-acetylarylamine + CoA. The enzyme catalyses an N-hydroxyarylamine + acetyl-CoA = an N-acetoxyarylamine + CoA. Functionally, catalyzes the N- or O-acetylation of various arylamine and heterocyclic amine substrates, and participates in the detoxification of a plethora of hydrazine and arylamine drugs. This is Arylamine N-acetyltransferase 2 (Nat2) from Mus musculus (Mouse).